Consider the following 878-residue polypeptide: Phosphoenolpyruvate carboxylase (878 aa).

Catalysis depends on residues histidine 140 and lysine 545.

Belongs to the PEPCase type 1 family. The cofactor is Mg(2+).

It carries out the reaction oxaloacetate + phosphate = phosphoenolpyruvate + hydrogencarbonate. In terms of biological role, forms oxaloacetate, a four-carbon dicarboxylic acid source for the tricarboxylic acid cycle. This Pseudomonas syringae pv. syringae (strain B728a) protein is Phosphoenolpyruvate carboxylase.